The following is a 253-amino-acid chain: uncharacterized protein (253 aa).

Positions 1 to 15 (MNRVILFHFHFFKNA) are cleaved as a signal peptide.

This is an uncharacterized protein from Archaeoglobus fulgidus (strain ATCC 49558 / DSM 4304 / JCM 9628 / NBRC 100126 / VC-16).